The sequence spans 233 residues: Lipoprotein-releasing system ATP-binding protein LolD (233 aa).

Residues 6-233 (LQCDNLCKRY…TAELSLMGAE (228 aa)) form the ABC transporter domain. 42–49 (GSSGSGKS) lines the ATP pocket.

The protein belongs to the ABC transporter superfamily. Lipoprotein translocase (TC 3.A.1.125) family. In terms of assembly, the complex is composed of two ATP-binding proteins (LolD) and two transmembrane proteins (LolC and LolE).

It localises to the cell inner membrane. In terms of biological role, part of the ABC transporter complex LolCDE involved in the translocation of mature outer membrane-directed lipoproteins, from the inner membrane to the periplasmic chaperone, LolA. Responsible for the formation of the LolA-lipoprotein complex in an ATP-dependent manner. Such a release is dependent of the sorting-signal (absence of an Asp at position 2 of the mature lipoprotein) and of LolA. This is Lipoprotein-releasing system ATP-binding protein LolD from Escherichia coli (strain K12).